Here is a 483-residue protein sequence, read N- to C-terminus: Glutamyl-tRNA(Gln) amidotransferase subunit A (483 aa).

Residues lysine 76 and serine 151 each act as charge relay system in the active site. Serine 175 serves as the catalytic Acyl-ester intermediate.

It belongs to the amidase family. GatA subfamily. Heterotrimer of A, B and C subunits.

The catalysed reaction is L-glutamyl-tRNA(Gln) + L-glutamine + ATP + H2O = L-glutaminyl-tRNA(Gln) + L-glutamate + ADP + phosphate + H(+). In terms of biological role, allows the formation of correctly charged Gln-tRNA(Gln) through the transamidation of misacylated Glu-tRNA(Gln) in organisms which lack glutaminyl-tRNA synthetase. The reaction takes place in the presence of glutamine and ATP through an activated gamma-phospho-Glu-tRNA(Gln). This is Glutamyl-tRNA(Gln) amidotransferase subunit A from Pseudomonas savastanoi pv. phaseolicola (strain 1448A / Race 6) (Pseudomonas syringae pv. phaseolicola (strain 1448A / Race 6)).